An 836-amino-acid chain; its full sequence is Lon protease (836 aa).

Positions Leu-41–Val-233 constitute a Lon N-terminal domain. Gly-385–Thr-392 lines the ATP pocket. Positions Val-627 to Pro-811 constitute a Lon proteolytic domain. Active-site residues include Ser-714 and Lys-757. The tract at residues Ala-816–Glu-836 is disordered.

Belongs to the peptidase S16 family. Homohexamer. Organized in a ring with a central cavity.

Its subcellular location is the cytoplasm. The enzyme catalyses Hydrolysis of proteins in presence of ATP.. Its function is as follows. ATP-dependent serine protease that mediates the selective degradation of mutant and abnormal proteins as well as certain short-lived regulatory proteins. Required for cellular homeostasis and for survival from DNA damage and developmental changes induced by stress. Degrades polypeptides processively to yield small peptide fragments that are 5 to 10 amino acids long. Binds to DNA in a double-stranded, site-specific manner. The chain is Lon protease from Chloroherpeton thalassium (strain ATCC 35110 / GB-78).